Consider the following 283-residue polypeptide: MSELSEQCEKRLKILLTNDDGIFAPGMTLLVSNLLKADFADLYIVAPKTEQSAKSMAMTFHEPVILQPYDYPLPVAGAWSVSGTPVDCVRIALAYLFKDELPDLVLSGINRGSNAGRHVFYSGTLGAAIESTLCGVPAVALSQEGNFSFFQEKNFDIPEMLKSLSLYALSLPFAPHPVALNVNFPASNERWKGMRFVTTGPEYSCGVPHFLFCDGDSKIFKLSGGPKIVEEIPSEEWQTLRASYIAVSPVMATTSPLATFSLEEFEQLQVGFYDFANSLGMEN.

A divalent metal cation-binding residues include Asp19, Asp20, Ser52, and Asn110.

Belongs to the SurE nucleotidase family. The cofactor is a divalent metal cation.

It localises to the cytoplasm. The catalysed reaction is a ribonucleoside 5'-phosphate + H2O = a ribonucleoside + phosphate. Nucleotidase that shows phosphatase activity on nucleoside 5'-monophosphates. The polypeptide is 5'-nucleotidase SurE 2 (Chlamydia caviae (strain ATCC VR-813 / DSM 19441 / 03DC25 / GPIC) (Chlamydophila caviae)).